A 375-amino-acid polypeptide reads, in one-letter code: Succinyl-diaminopimelate desuccinylase (375 aa).

His66 is a Zn(2+) binding site. Residue Asp68 is part of the active site. Zn(2+) is bound at residue Asp99. Glu133 (proton acceptor) is an active-site residue. Glu134, Glu162, and His348 together coordinate Zn(2+).

Belongs to the peptidase M20A family. DapE subfamily. In terms of assembly, homodimer. Zn(2+) is required as a cofactor. It depends on Co(2+) as a cofactor.

It carries out the reaction N-succinyl-(2S,6S)-2,6-diaminopimelate + H2O = (2S,6S)-2,6-diaminopimelate + succinate. Its pathway is amino-acid biosynthesis; L-lysine biosynthesis via DAP pathway; LL-2,6-diaminopimelate from (S)-tetrahydrodipicolinate (succinylase route): step 3/3. Catalyzes the hydrolysis of N-succinyl-L,L-diaminopimelic acid (SDAP), forming succinate and LL-2,6-diaminopimelate (DAP), an intermediate involved in the bacterial biosynthesis of lysine and meso-diaminopimelic acid, an essential component of bacterial cell walls. The sequence is that of Succinyl-diaminopimelate desuccinylase from Buchnera aphidicola subsp. Acyrthosiphon pisum (strain APS) (Acyrthosiphon pisum symbiotic bacterium).